A 461-amino-acid chain; its full sequence is Elongation factor 1-alpha (461 aa).

The tr-type G domain occupies 5–242 (KIHINIVVIG…DAILPPSRPT (238 aa)). The G1 stretch occupies residues 14–21 (GHVDSGKS). Residue 14 to 21 (GHVDSGKS) coordinates GTP. Residues 70-74 (GITID) are G2. A G3 region spans residues 91–94 (DAPG). Residues 91–95 (DAPGH) and 153–156 (NKMD) each bind GTP. The G4 stretch occupies residues 153-156 (NKMD). The tract at residues 194–196 (SGW) is G5. Residues Glu301 and Glu374 each carry the 5-glutamyl glycerylphosphorylethanolamine modification.

It belongs to the TRAFAC class translation factor GTPase superfamily. Classic translation factor GTPase family. EF-Tu/EF-1A subfamily.

Its subcellular location is the cytoplasm. Functionally, this protein promotes the GTP-dependent binding of aminoacyl-tRNA to the A-site of ribosomes during protein biosynthesis. This Apis mellifera (Honeybee) protein is Elongation factor 1-alpha.